We begin with the raw amino-acid sequence, 193 residues long: ATP-dependent Clp protease proteolytic subunit 2 (193 aa).

Ser-98 serves as the catalytic Nucleophile. His-123 is a catalytic residue.

This sequence belongs to the peptidase S14 family. As to quaternary structure, fourteen ClpP subunits assemble into 2 heptameric rings which stack back to back to give a disk-like structure with a central cavity, resembling the structure of eukaryotic proteasomes.

It localises to the cytoplasm. The catalysed reaction is Hydrolysis of proteins to small peptides in the presence of ATP and magnesium. alpha-casein is the usual test substrate. In the absence of ATP, only oligopeptides shorter than five residues are hydrolyzed (such as succinyl-Leu-Tyr-|-NHMec, and Leu-Tyr-Leu-|-Tyr-Trp, in which cleavage of the -Tyr-|-Leu- and -Tyr-|-Trp bonds also occurs).. Cleaves peptides in various proteins in a process that requires ATP hydrolysis. Has a chymotrypsin-like activity. Plays a major role in the degradation of misfolded proteins. This is ATP-dependent Clp protease proteolytic subunit 2 from Bacillus cereus (strain ATCC 10987 / NRS 248).